Consider the following 284-residue polypeptide: Probable palmitoyltransferase ZDHHC24 (284 aa).

Over 1-18 (MGQPWAAGSTDGAPAQLP) the chain is Cytoplasmic. A helical transmembrane segment spans residues 19 to 39 (LVLTALWAAAVGLELAYVLVL). The Extracellular segment spans residues 40–52 (GPGPPPLGPLARA). Residues 53-73 (LQLALAAFQLLNLLGNVGLFL) traverse the membrane as a helical segment. The Cytoplasmic portion of the chain corresponds to 74 to 137 (RSDPSIRGVM…GRCVGFGNYR (64 aa)). A DHHC domain is found at 94–144 (AYCYQCQSQVPPRSGHCSACRVCILRRDHHCRLLGRCVGFGNYRPFLCLLL). The active-site S-palmitoyl cysteine intermediate is C124. Residues 138-158 (PFLCLLLHAAGVLLHVSVLLG) form a helical membrane-spanning segment. Topologically, residues 159 to 166 (PALSALLR) are extracellular. Residues 167–187 (AHTPLHMAALLLLPWLMLLTG) traverse the membrane as a helical segment. Topologically, residues 188–201 (RVSLAQFALAFVTD) are cytoplasmic. The chain crosses the membrane as a helical span at residues 202-222 (TCVAGALLCGAGLLFHGMLLL). Over 223–284 (RGQTTWEWAR…TTADVGHTAS (62 aa)) the chain is Extracellular.

It belongs to the DHHC palmitoyltransferase family.

The protein localises to the membrane. It catalyses the reaction L-cysteinyl-[protein] + hexadecanoyl-CoA = S-hexadecanoyl-L-cysteinyl-[protein] + CoA. Functionally, probable palmitoyltransferase that could catalyze the addition of palmitate onto various protein substrates. The sequence is that of Probable palmitoyltransferase ZDHHC24 from Homo sapiens (Human).